The sequence spans 381 residues: Dual specificity protein phosphatase 6 (381 aa).

The 119-residue stretch at 30 to 148 folds into the Rhodanese domain; the sequence is GNERLLLMDC…FQAEFSLHCE (119 aa). The disordered stretch occupies residues 176–203; it reads SSSDIESDLDRDPNSATDSDGSPLSNSQ. Residues 189–203 show a composition bias toward polar residues; the sequence is NSATDSDGSPLSNSQ. Residues 206–349 enclose the Tyrosine-protein phosphatase domain; the sequence is FPVEILPFLY…LLDFERTLGL (144 aa). The active-site Phosphocysteine intermediate is the cysteine 293.

The protein belongs to the protein-tyrosine phosphatase family. Non-receptor class dual specificity subfamily. As to quaternary structure, interacts with MAPK1/ERK2. Post-translationally, ubiquitinated by the SCF(FBXO31) complex, leading to its proteasomal degradation. In terms of tissue distribution, expressed in keratinocytes (at protein level).

The protein localises to the cytoplasm. It catalyses the reaction O-phospho-L-tyrosyl-[protein] + H2O = L-tyrosyl-[protein] + phosphate. The enzyme catalyses O-phospho-L-seryl-[protein] + H2O = L-seryl-[protein] + phosphate. The catalysed reaction is O-phospho-L-threonyl-[protein] + H2O = L-threonyl-[protein] + phosphate. Functionally, dual specificity protein phosphatase, which mediates dephosphorylation and inactivation of MAP kinases. Has a specificity for the ERK family. Plays an important role in alleviating chronic postoperative pain. Necessary for the normal dephosphorylation of the long-lasting phosphorylated forms of spinal MAPK1/3 and MAP kinase p38 induced by peripheral surgery, which drives the resolution of acute postoperative allodynia. Also important for dephosphorylation of MAPK1/3 in local wound tissue, which further contributes to resolution of acute pain. Promotes cell differentiation by regulating MAPK1/MAPK3 activity and regulating the expression of AP1 transcription factors. This Homo sapiens (Human) protein is Dual specificity protein phosphatase 6 (DUSP6).